The sequence spans 429 residues: UDP-N-acetylglucosamine 1-carboxyvinyltransferase (429 aa).

Position 22-23 (22-23 (KN)) interacts with phosphoenolpyruvate. Arg102 is a binding site for UDP-N-acetyl-alpha-D-glucosamine. Cys126 (proton donor) is an active-site residue. Residue Cys126 is modified to 2-(S-cysteinyl)pyruvic acid O-phosphothioketal. UDP-N-acetyl-alpha-D-glucosamine is bound by residues 131–135 (RPVDL), Asp316, and Ile338.

Belongs to the EPSP synthase family. MurA subfamily.

The protein localises to the cytoplasm. The enzyme catalyses phosphoenolpyruvate + UDP-N-acetyl-alpha-D-glucosamine = UDP-N-acetyl-3-O-(1-carboxyvinyl)-alpha-D-glucosamine + phosphate. It functions in the pathway cell wall biogenesis; peptidoglycan biosynthesis. In terms of biological role, cell wall formation. Adds enolpyruvyl to UDP-N-acetylglucosamine. The protein is UDP-N-acetylglucosamine 1-carboxyvinyltransferase of Afipia carboxidovorans (strain ATCC 49405 / DSM 1227 / KCTC 32145 / OM5) (Oligotropha carboxidovorans).